Reading from the N-terminus, the 306-residue chain is Ribonuclease Z (306 aa).

Zn(2+)-binding residues include H63, H65, D67, H68, H141, D211, and H269. D67 acts as the Proton acceptor in catalysis.

Belongs to the RNase Z family. Homodimer. Zn(2+) serves as cofactor.

It catalyses the reaction Endonucleolytic cleavage of RNA, removing extra 3' nucleotides from tRNA precursor, generating 3' termini of tRNAs. A 3'-hydroxy group is left at the tRNA terminus and a 5'-phosphoryl group is left at the trailer molecule.. In terms of biological role, zinc phosphodiesterase, which displays some tRNA 3'-processing endonuclease activity. Probably involved in tRNA maturation, by removing a 3'-trailer from precursor tRNA. The sequence is that of Ribonuclease Z from Staphylococcus epidermidis (strain ATCC 12228 / FDA PCI 1200).